The sequence spans 402 residues: MKIAVAGSGYVGLSLGVLLSLQNEVTIVDILPSKVDKINNGLSPIQDEYIEYYLKSKQLSIKATLDSKAAYKEAELVIIATPTNYNSRINYFDTQHVETVIKEVLSVNSHATLIIKSTIPIGFITEMRQKFQTDRIIFSPEFLRESKALYDNLYPSRIIVSCEENDSPKVKADAEKFALLLKSAAKKNNVPVLIMGASEAEAVKLFANTYLALRVAYFNELDTYAESRKLNSHMIIQGISYDDRIGMHYNNPSFGYGGYCLPKDTKQLLANYNNIPQTLIEAIVSSNNVRKSYIAKQIINVLKEQESPVKVVGVYRLIMKSNSDNFRESAIKDVIDILKSKDIKIIIYEPMLNKLESEDQSVLVNDLENFKKQANIIVTNRYDNELQDVKNKVYSRDIFGRD.

NAD(+) is bound by residues 2–19 (KIAVAGSGYVGLSLGVLL), valine 11, aspartate 29, lysine 34, threonine 83, threonine 118, and glutamate 145. Substrate contacts are provided by residues 141–145 (EFLRE), lysine 204, asparagine 208, 249–253 (YNNPS), and glycine 257. Tyrosine 259 lines the NAD(+) pocket. The Nucleophile role is filled by cysteine 260. Lysine 263 contacts NAD(+). Lysine 320 is a binding site for substrate. NAD(+) is bound at residue arginine 327.

It belongs to the UDP-glucose/GDP-mannose dehydrogenase family.

It catalyses the reaction UDP-alpha-D-glucose + 2 NAD(+) + H2O = UDP-alpha-D-glucuronate + 2 NADH + 3 H(+). Its pathway is nucleotide-sugar biosynthesis; UDP-alpha-D-glucuronate biosynthesis; UDP-alpha-D-glucuronate from UDP-alpha-D-glucose: step 1/1. In terms of biological role, catalyzes the formation of UDP-glucuronic acid which is required for capsular hyaluronic acid synthesis. This Streptococcus pyogenes serotype M18 (strain MGAS8232) protein is UDP-glucose 6-dehydrogenase (hasB).